A 590-amino-acid chain; its full sequence is Protein NRT1/ PTR FAMILY 6.3 (590 aa).

2 helical membrane passes run L46 to G66 and F77 to G97. T101 is modified (phosphothreonine; by CIPK23). The next 10 membrane-spanning stretches (helical) occupy residues I102 to I122, G143 to V163, F193 to D213, W219 to T239, M342 to L362, I374 to L394, I423 to K443, L460 to Y480, G501 to V521, and Y542 to F562. Substrate is bound by residues H356 and T360.

This sequence belongs to the major facilitator superfamily. Proton-dependent oligopeptide transporter (POT/PTR) (TC 2.A.17) family. Monomer and homodimer. The dimer has the 2 monomers in the same orientation. Interacts with CIPK23. In terms of processing, acts as a high-affinity nitrate transporter when phosphorylated and as a low-affinity transporter when dephosphorylated. Forms homodimer when unphosphorylated and monomer when phosphorylated. Low nitrogen concentration in the medium stimulates phosphorylation. Phosphorylation also regulates the nitrate signaling. Expressed in the stele in lateral root primordia before emergence and in the tip of primary and emerged lateral roots. Detected in emerging and immature leaves, guard cells, flower buds, style, stigma, anthers and pollen grains. Not detected in the shoot apical meristem.

It localises to the membrane. Dual affinity nitrate transporter. Involved in proton-dependent nitrate uptake and in the regulation of the nitrate transporter NRT2.1. Also acts as a nitrate sensor that trigger a specific signaling pathway stimulating lateral root growth and seed germination. The uptake activity is not required for sensor function. Displays an auxin transport facilitation inhibited by high nitrate concentration. Required to prevent auxin accumulation in preemerged lateral root primordia and young lateral roots when external nitrate concentration is low or null. May be involved in the basipetal transport of auxin out of the lateral root tips. Acts as a bidirectional transporter involved in root-to-shoot nitrate translocation. Recognizes specifically nitrate and chlorate, but not nitrite, alanine, sulfate, phosphate or the di-peptide Ala-Ala. The sequence is that of Protein NRT1/ PTR FAMILY 6.3 (NPF6.3) from Arabidopsis thaliana (Mouse-ear cress).